The primary structure comprises 159 residues: MHRIAVVPGSFDPVTLGHLDVIERAARMWDEVHVLVVHNPDKSALLPIAQRVALLDRSIEDAGIAGNIVASWSVGLLVDYCTDIGAHVLVKGIRSQVDVAYETPMAIVNRHLAEVETVFLLPNPANAHVSSSLVRQVASLGGDVSPYVPAAVSELLSSS.

Substrate is bound at residue S10. ATP is bound by residues 10–11 (SF) and H18. The substrate site is built by K42, L77, and K91. ATP-binding positions include 92-94 (GIR), E102, and 126-132 (NAHVSSS).

The protein belongs to the bacterial CoaD family. Homohexamer. Mg(2+) serves as cofactor.

Its subcellular location is the cytoplasm. The enzyme catalyses (R)-4'-phosphopantetheine + ATP + H(+) = 3'-dephospho-CoA + diphosphate. The protein operates within cofactor biosynthesis; coenzyme A biosynthesis; CoA from (R)-pantothenate: step 4/5. Reversibly transfers an adenylyl group from ATP to 4'-phosphopantetheine, yielding dephospho-CoA (dPCoA) and pyrophosphate. In Leifsonia xyli subsp. xyli (strain CTCB07), this protein is Phosphopantetheine adenylyltransferase.